A 121-amino-acid polypeptide reads, in one-letter code: MARIAGVDLPRDKQIVIALTYIFGIGNTTAVKVLADAGVPTDVRTRDLTPDQEDKIRAALDTVKVEGDLRREVSLNIKRLQEIGSYRGMRHRRGLPVRGQNTKNNARTRKGKKVSIAGKKK.

A disordered region spans residues 89 to 121 (MRHRRGLPVRGQNTKNNARTRKGKKVSIAGKKK). Over residues 106-121 (ARTRKGKKVSIAGKKK) the composition is skewed to basic residues.

The protein belongs to the universal ribosomal protein uS13 family. In terms of assembly, part of the 30S ribosomal subunit. Forms a loose heterodimer with protein S19. Forms two bridges to the 50S subunit in the 70S ribosome.

Located at the top of the head of the 30S subunit, it contacts several helices of the 16S rRNA. In the 70S ribosome it contacts the 23S rRNA (bridge B1a) and protein L5 of the 50S subunit (bridge B1b), connecting the 2 subunits; these bridges are implicated in subunit movement. Contacts the tRNAs in the A and P-sites. The chain is Small ribosomal subunit protein uS13 from Latilactobacillus sakei subsp. sakei (strain 23K) (Lactobacillus sakei subsp. sakei).